A 369-amino-acid polypeptide reads, in one-letter code: Transmembrane protein 144 homolog A (369 aa).

10 helical membrane passes run 6 to 26 (VIGY…YVPV), 35 to 55 (LSYA…AMMI), 63 to 83 (PIGI…IPII), 85 to 105 (LVGL…VGFF), 122 to 142 (DWMN…FFFI), 221 to 241 (VAGI…MIPM), 256 to 276 (IIFS…MFYA), 288 to 308 (TVFP…GLMI), 318 to 338 (GYPI…VFYF), and 347 to 367 (LLIL…LAFS).

Belongs to the TMEM144 family.

It localises to the membrane. This Dictyostelium discoideum (Social amoeba) protein is Transmembrane protein 144 homolog A (tmem144A).